The following is a 405-amino-acid chain: 3-isopropylmalate dehydrogenase 2, chloroplastic (405 aa).

The transit peptide at 1 to 33 (MAAALQTNIRTVKVPATFRAVSKQSLAPFRVRC) directs the protein to the chloroplast. A Phosphoserine modification is found at S70. Residue 114 to 129 (IGGYKWDNNEKHLRPE) coordinates NAD(+). Residues R136, R146, and R174 each contribute to the substrate site. N234 contacts NAD(+). D264 lines the substrate pocket. Mg(2+) is bound at residue D264. N265 is an NAD(+) binding site. 2 residues coordinate Mg(2+): D288 and D292. 318-334 (EPIHGSAPDIAGQDKAN) contributes to the NAD(+) binding site.

This sequence belongs to the isocitrate and isopropylmalate dehydrogenases family. Homodimer. Requires Mg(2+) as cofactor. Mn(2+) serves as cofactor. In terms of tissue distribution, expressed at low levels in seedlings, cotyledons, hypocotyls, flowers, roots, pollen, leaves and stems.

Its subcellular location is the plastid. The protein resides in the chloroplast stroma. The catalysed reaction is (2R,3S)-3-isopropylmalate + NAD(+) = 4-methyl-2-oxopentanoate + CO2 + NADH. Its pathway is amino-acid biosynthesis; L-leucine biosynthesis; L-leucine from 3-methyl-2-oxobutanoate: step 3/4. Regulated by a thiol-based redox modification. Functionally, involved in leucine biosynthesis; catalyzes the oxidative decarboxylation step in leucine biosynthesis (primary metabolism). Catalyzes the oxidation of 3-carboxy-2-hydroxy-4-methylpentanoate (3-isopropylmalate, 3-IPM) to 3-carboxy-4-methyl-2-oxopentanoate. The product decarboxylates to 4-methyl-2 oxopentanoate. Required during pollen development and involved in embryo sac development. The sequence is that of 3-isopropylmalate dehydrogenase 2, chloroplastic from Arabidopsis thaliana (Mouse-ear cress).